The chain runs to 301 residues: GTPase Era (301 aa).

In terms of domain architecture, Era-type G spans 7–175 (YCGFIAIVGR…AAIVRKHLPE (169 aa)). Positions 15-22 (GRPNVGKS) are G1. 15-22 (GRPNVGKS) serves as a coordination point for GTP. Positions 41–45 (QTTRH) are G2. The G3 stretch occupies residues 62-65 (DTPG). GTP-binding positions include 62–66 (DTPGL) and 124–127 (NKVD). The interval 124–127 (NKVD) is G4. A G5 region spans residues 154-156 (ISA). Residues 206–283 (LGAELPYSVT…HLELWVKVKS (78 aa)) enclose the KH type-2 domain.

It belongs to the TRAFAC class TrmE-Era-EngA-EngB-Septin-like GTPase superfamily. Era GTPase family. As to quaternary structure, monomer.

The protein resides in the cytoplasm. It is found in the cell inner membrane. Its function is as follows. An essential GTPase that binds both GDP and GTP, with rapid nucleotide exchange. Plays a role in 16S rRNA processing and 30S ribosomal subunit biogenesis and possibly also in cell cycle regulation and energy metabolism. In Escherichia fergusonii (strain ATCC 35469 / DSM 13698 / CCUG 18766 / IAM 14443 / JCM 21226 / LMG 7866 / NBRC 102419 / NCTC 12128 / CDC 0568-73), this protein is GTPase Era.